The primary structure comprises 314 residues: Ribonuclease Z (314 aa).

Zn(2+)-binding residues include His62, His64, Asp66, His67, His139, Asp210, and His268. Asp66 acts as the Proton acceptor in catalysis.

This sequence belongs to the RNase Z family. Homodimer. The cofactor is Zn(2+).

It carries out the reaction Endonucleolytic cleavage of RNA, removing extra 3' nucleotides from tRNA precursor, generating 3' termini of tRNAs. A 3'-hydroxy group is left at the tRNA terminus and a 5'-phosphoryl group is left at the trailer molecule.. Functionally, zinc phosphodiesterase, which displays some tRNA 3'-processing endonuclease activity. Probably involved in tRNA maturation, by removing a 3'-trailer from precursor tRNA. The polypeptide is Ribonuclease Z (Acaryochloris marina (strain MBIC 11017)).